A 704-amino-acid polypeptide reads, in one-letter code: Vacuolar fusion protein CCZ1 (704 aa).

The tract at residues Leu281 to Leu322 is disordered.

It belongs to the CCZ1 family. In terms of assembly, forms a complex with MON1. Interacts with YPT7. Interacts with YPT10 with a strong preference for the GTP-associated form; may interact with other small GTPase Rab5 homologs but at much lower levels.

Its subcellular location is the endosome. The protein localises to the multivesicular body membrane. It is found in the prevacuolar compartment membrane. The protein resides in the vacuole membrane. It localises to the vesicle. The YPT7 guanine nucleotide-exchange factor (GEF) activity of the MON1-CCZ1 complex is autoinhibited by the N-terminal disordered region of MON1. Its function is as follows. In complex with MON1, is required for multiple vacuole delivery pathways including the cytoplasm to vacuole transport (Cvt), autophagy, pexophagy and endocytosis. The MON1-CCZ1 complex acts at the fusion of vesicles with the vacuole, through its regulation of the SNARE complex during the coordinated priming and docking stages of fusion, and particularly at the stage of tethering/docking. The MON1-CCZ1 complex is recruited to membranes enriched in charged lipids, particularly phosphatidylinositol 3-phosphate (PtdIns3P), by GTP-associated small GTPase RAB5 homologs (YPT10, YPT52, YPT53 and VPS21). The MON1-CCZ1 complex recruits GDP-associated small GTPase YPT7 to membranes and acts as a guanine nucleotide-exchange factor (GEF), promoting nucleotide exchange on YPT7 and triggering endosomal maturation by recruiting downstream effectors such as components of the HOPS tethering complex. The protein is Vacuolar fusion protein CCZ1 (CCZ1) of Saccharomyces cerevisiae (strain ATCC 204508 / S288c) (Baker's yeast).